Reading from the N-terminus, the 118-residue chain is NADH-ubiquinone oxidoreductase chain 3 (118 aa).

3 helical membrane-spanning segments follow: residues 9–29, 62–82, and 87–107; these read IYLVISLLVSLILLGVPFLFA, LVSILFIIFDLEVTFFFPWAV, and IDLFGFWSMMAFLLILTIGFL.

The protein belongs to the complex I subunit 3 family.

The protein localises to the mitochondrion membrane. It catalyses the reaction a ubiquinone + NADH + 5 H(+)(in) = a ubiquinol + NAD(+) + 4 H(+)(out). Core subunit of the mitochondrial membrane respiratory chain NADH dehydrogenase (Complex I) that is believed to belong to the minimal assembly required for catalysis. Complex I functions in the transfer of electrons from NADH to the respiratory chain. The immediate electron acceptor for the enzyme is believed to be ubiquinone. This chain is NADH-ubiquinone oxidoreductase chain 3 (ND3), found in Triticum aestivum (Wheat).